A 284-amino-acid chain; its full sequence is Putative thiosulfate sulfurtransferase SseB (284 aa).

Rhodanese domains follow at residues 20–138 (AGDP…SIET) and 169–280 (GAGG…RPVG). R183 lines the substrate pocket. The active-site Cysteine persulfide intermediate is the C241.

The catalysed reaction is thiosulfate + hydrogen cyanide = thiocyanate + sulfite + 2 H(+). The chain is Putative thiosulfate sulfurtransferase SseB (sseB) from Mycobacterium tuberculosis (strain CDC 1551 / Oshkosh).